A 728-amino-acid polypeptide reads, in one-letter code: Polyribonucleotide nucleotidyltransferase (728 aa).

Residues Asp509 and Asp515 each coordinate Mg(2+). Residues 576 to 638 (TKIYTFYIPK…TKLKIAILKI (63 aa)) form the KH domain. In terms of domain architecture, S1 motif spans 648 to 715 (GTIYKAKVKN…KFRKIKLSHK (68 aa)).

This sequence belongs to the polyribonucleotide nucleotidyltransferase family. The cofactor is Mg(2+).

Its subcellular location is the cytoplasm. The enzyme catalyses RNA(n+1) + phosphate = RNA(n) + a ribonucleoside 5'-diphosphate. In terms of biological role, involved in mRNA degradation. Catalyzes the phosphorolysis of single-stranded polyribonucleotides processively in the 3'- to 5'-direction. The polypeptide is Polyribonucleotide nucleotidyltransferase (Karelsulcia muelleri (strain GWSS) (Sulcia muelleri)).